A 340-amino-acid chain; its full sequence is Outer membrane protein U (340 aa).

The signal sequence occupies residues 1–21 (MKKTLIALSVSAAAVATGVNA).

Belongs to the Gram-negative porin family. In terms of assembly, homotrimer.

The protein resides in the cell outer membrane. Forms pores that allow passive diffusion of small molecules across the outer membrane. The polypeptide is Outer membrane protein U (ompU) (Vibrio vulnificus (strain CMCP6)).